We begin with the raw amino-acid sequence, 116 residues long: ATP-dependent Clp protease adapter protein ClpS (116 aa).

Polar residues predominate over residues 1–11 (MRRFNTIMQGK). The segment at 1-23 (MRRFNTIMQGKTNGGNGPESGTV) is disordered.

This sequence belongs to the ClpS family. Binds to the N-terminal domain of the chaperone ClpA.

Its function is as follows. Involved in the modulation of the specificity of the ClpAP-mediated ATP-dependent protein degradation. This Brucella melitensis biotype 2 (strain ATCC 23457) protein is ATP-dependent Clp protease adapter protein ClpS.